The primary structure comprises 441 residues: ATP-dependent protease ATPase subunit HslU (441 aa).

ATP is bound by residues Ile-18, 60–65 (GVGKTE), Asp-254, Glu-319, and Arg-391.

It belongs to the ClpX chaperone family. HslU subfamily. In terms of assembly, a double ring-shaped homohexamer of HslV is capped on each side by a ring-shaped HslU homohexamer. The assembly of the HslU/HslV complex is dependent on binding of ATP.

Its subcellular location is the cytoplasm. Functionally, ATPase subunit of a proteasome-like degradation complex; this subunit has chaperone activity. The binding of ATP and its subsequent hydrolysis by HslU are essential for unfolding of protein substrates subsequently hydrolyzed by HslV. HslU recognizes the N-terminal part of its protein substrates and unfolds these before they are guided to HslV for hydrolysis. This chain is ATP-dependent protease ATPase subunit HslU, found in Shewanella woodyi (strain ATCC 51908 / MS32).